A 125-amino-acid chain; its full sequence is Upsalin (125 aa).

Positions 1–16 are cleaved as a signal peptide; it reads MFPTHVLLIVIACVTA.

Weakly glycosylated. As to expression, expressed at highest levels in mantle, followed by adductor muscle. Found in the nacreous shell layer (at protein level).

The protein localises to the secreted. The chain is Upsalin from Unio pictorum (Painter's mussel).